The sequence spans 36 residues: Photosystem II reaction center protein M (36 aa).

Met1 is modified (blocked amino end (Met)). The Lumenal segment spans residues 1–11 (MEVNQLGFIAT). Residues 12 to 27 (ALFVLVPSVFLIILYV) traverse the membrane as a helical segment. The Cytoplasmic segment spans residues 28–36 (QTESQQKSS).

This sequence belongs to the PsbM family. As to quaternary structure, PSII is composed of 1 copy each of membrane proteins PsbA, PsbB, PsbC, PsbD, PsbE, PsbF, PsbH, PsbI, PsbJ, PsbK, PsbL, PsbM, PsbT, PsbX, PsbY, PsbZ, Psb30/Ycf12, peripheral proteins PsbO, CyanoQ (PsbQ), PsbU, PsbV, PsbU, PsbV and a large number of cofactors. It forms dimeric complexes. The cofactor is PSII binds multiple chlorophylls, carotenoids and specific lipids..

The protein localises to the cellular thylakoid membrane. Functionally, one of the components of the core complex of photosystem II (PSII). PSII is a light-driven water:plastoquinone oxidoreductase that uses light energy to abstract electrons from H(2)O, generating O(2) and a proton gradient subsequently used for ATP formation. It consists of a core antenna complex that captures photons, and an electron transfer chain that converts photonic excitation into a charge separation. This subunit is found at the monomer-monomer interface. Probably involved in dimerization of PSII; at the monomer-monomer interface the only protein-protein contacts observed are between the 2 PsbM subunits. Lipids, chlorophylls and carotenoids contribute strongly to PSII dimerization. This is Photosystem II reaction center protein M from Thermostichus vulcanus (Synechococcus vulcanus).